The primary structure comprises 497 residues: Cytochrome P450 26A1 (497 aa).

Cys442 contributes to the heme binding site.

This sequence belongs to the cytochrome P450 family. Heme serves as cofactor.

The protein localises to the endoplasmic reticulum membrane. It is found in the microsome membrane. It catalyses the reaction all-trans-retinoate + reduced [NADPH--hemoprotein reductase] + O2 = all-trans-(4S)-hydroxyretinoate + oxidized [NADPH--hemoprotein reductase] + H2O + H(+). The catalysed reaction is all-trans-(4S)-hydroxyretinoate + reduced [NADPH--hemoprotein reductase] + O2 = all-trans-(4S,16)-dihydroxyretinoate + oxidized [NADPH--hemoprotein reductase] + H2O + H(+). The enzyme catalyses all-trans-retinoate + reduced [NADPH--hemoprotein reductase] + O2 = all-trans-18-hydroxyretinoate + oxidized [NADPH--hemoprotein reductase] + H2O + H(+). Functionally, a cytochrome P450 monooxygenase involved in the metabolism of retinoates (RAs), the active metabolites of vitamin A, and critical signaling molecules in animals. RAs exist as at least four different isomers: all-trans-RA (atRA), 9-cis-RA, 13-cis-RA, and 9,13-dicis-RA, where atRA is considered to be the biologically active isomer, although 9-cis-RA and 13-cis-RA also have activity. Catalyzes the hydroxylation of atRA primarily at C-4 and C-18, thereby contributing to the regulation of atRA homeostasis and signaling. Hydroxylation of atRA limits its biological activity and initiates a degradative process leading to its eventual elimination. Involved in the convertion of atRA to all-trans-4-oxo-RA. Able to metabolize other RAs such as 9-cis, 13-cis and 9,13-di-cis RA. Can oxidize all-trans-13,14-dihydroretinoate (DRA) to metabolites which could include all-trans-4-oxo-DRA, all-trans-4-hydroxy-DRA, all-trans-5,8-epoxy-DRA, and all-trans-18-hydroxy-DRA. May play a role in the oxidative metabolism of xenobiotics such as tazarotenic acid. This is Cytochrome P450 26A1 from Mus musculus (Mouse).